The following is a 355-amino-acid chain: Peptide chain release factor 1 (355 aa).

Gln-233 is subject to N5-methylglutamine. A compositionally biased stretch (basic and acidic residues) spans 283–293 (EKNKDRADARK). The segment at 283–304 (EKNKDRADARKSQVGTGDRSER) is disordered.

The protein belongs to the prokaryotic/mitochondrial release factor family. Methylated by PrmC. Methylation increases the termination efficiency of RF1.

It is found in the cytoplasm. Functionally, peptide chain release factor 1 directs the termination of translation in response to the peptide chain termination codons UAG and UAA. The protein is Peptide chain release factor 1 of Finegoldia magna (strain ATCC 29328 / DSM 20472 / WAL 2508) (Peptostreptococcus magnus).